Consider the following 125-residue polypeptide: SOSS complex subunit C homolog A (125 aa).

A compositionally biased stretch (polar residues) spans 1–16 (MAFPNTSAQQAETNSK). Disordered regions lie at residues 1–20 (MAFP…SLEE), 38–74 (SNTN…AAFN), and 105–125 (PATP…NNPK).

The protein belongs to the SOSS-C family.

The chain is SOSS complex subunit C homolog A from Drosophila willistoni (Fruit fly).